Reading from the N-terminus, the 266-residue chain is Glycine--tRNA ligase beta subunit (266 aa).

The protein belongs to the class-II aminoacyl-tRNA synthetase family. Tetramer of two alpha and two beta subunits.

It is found in the cytoplasm. It catalyses the reaction tRNA(Gly) + glycine + ATP = glycyl-tRNA(Gly) + AMP + diphosphate. This chain is Glycine--tRNA ligase beta subunit (glyS), found in Moraxella catarrhalis (Branhamella catarrhalis).